Reading from the N-terminus, the 151-residue chain is Cytochrome c-type biogenesis protein CcmE (151 aa).

The Cytoplasmic portion of the chain corresponds to 1 to 8 (MNPQRKKR). The helical; Signal-anchor for type II membrane protein transmembrane segment at 9 to 29 (LLLIVGLLVGVGVAVGFALSA) threads the bilayer. Topologically, residues 30–151 (LQQNINLFYT…QAAAGGETKP (122 aa)) are periplasmic. Histidine 124 and tyrosine 128 together coordinate heme.

It belongs to the CcmE/CycJ family.

It localises to the cell inner membrane. Heme chaperone required for the biogenesis of c-type cytochromes. Transiently binds heme delivered by CcmC and transfers the heme to apo-cytochromes in a process facilitated by CcmF and CcmH. The sequence is that of Cytochrome c-type biogenesis protein CcmE from Pseudomonas putida (strain ATCC 700007 / DSM 6899 / JCM 31910 / BCRC 17059 / LMG 24140 / F1).